The following is a 459-amino-acid chain: Ribulose bisphosphate carboxylase (459 aa).

Asn-111 serves as a coordination point for substrate. Lys-166 functions as the Proton acceptor in the catalytic mechanism. Lys-168 provides a ligand contact to substrate. Mg(2+) contacts are provided by Lys-191, Asp-193, and Glu-194. The residue at position 191 (Lys-191) is an N6-carboxylysine. The Proton acceptor role is filled by His-287. Substrate contacts are provided by Arg-288, His-321, and Ser-368.

This sequence belongs to the RuBisCO large chain family. Type II subfamily. Homodimer. The cofactor is Mg(2+).

It catalyses the reaction 2 (2R)-3-phosphoglycerate + 2 H(+) = D-ribulose 1,5-bisphosphate + CO2 + H2O. The enzyme catalyses D-ribulose 1,5-bisphosphate + O2 = 2-phosphoglycolate + (2R)-3-phosphoglycerate + 2 H(+). In terms of biological role, ruBisCO catalyzes two reactions: the carboxylation of D-ribulose 1,5-bisphosphate, the primary event in carbon dioxide fixation, as well as the oxidative fragmentation of the pentose substrate. Both reactions occur simultaneously and in competition at the same active site. This chain is Ribulose bisphosphate carboxylase, found in Cereibacter sphaeroides (strain ATCC 17029 / ATH 2.4.9) (Rhodobacter sphaeroides).